Consider the following 366-residue polypeptide: Adenine DNA glycosylase (366 aa).

30-31 (WR) contributes to the DNA binding site. The active-site Proton donor/acceptor is the E43. Residues 48 to 49 (QT), 86 to 88 (LGY), Y126, and E188 contribute to the DNA site. Residues 105 to 133 (RYGGKVPDDPDEFSRLKGVGPYTVGAVLS) enclose the HhH domain. Residues C198, C205, C208, and C214 each contribute to the [4Fe-4S] cluster site. A DNA-binding site is contributed by S308.

It belongs to the Nth/MutY family. [4Fe-4S] cluster is required as a cofactor.

It carries out the reaction Hydrolyzes free adenine bases from 7,8-dihydro-8-oxoguanine:adenine mismatched double-stranded DNA, leaving an apurinic site.. Functionally, base excision repair (BER) glycosylase that initiates repair of A:oxoG to C:G by removing the inappropriately paired adenine base from the DNA backbone, generating an abasic site product. 8-oxoguanine (oxoG) is a genotoxic DNA lesion resulting from oxidation of guanine; this residue is misread by replicative DNA polymerases, that insert adenine instead of cytosine opposite the oxidized damaged base. Shows a powerful dicrimination of A versus C, since it does not cleave cytosine in oxoG:C pairs. May also be able to remove adenine from A:G mispairs, although this activity may not be physiologically relevant. The sequence is that of Adenine DNA glycosylase from Geobacillus stearothermophilus (Bacillus stearothermophilus).